A 425-amino-acid polypeptide reads, in one-letter code: MKYLNCFISTGLAAFFLVNSTSVLAADCSSDLTSGISTKRIYYVAPNGNSSNNGSSFNAPMSFSAAMAAVNPGELILLKPGTYTIPYTQGKGNTITFNKSGKDGAPIYVAAANCGRAVFDFSFPDSQWVQASYGFYVTGDYWYFKGVEVTRAGYQGAYVIGSHNTFENTAFHHNRNTGLEINNGGSYNTVINSDAYRNYDPKKNGSMADGFGPKQKQGPGNRFVGCRAWENSDDGFDLFDSPQKVVIENSWAFRNGINYWNDSAFAGNGNGFKLGGNQAVGNHRITRSVAFGNVSKGFDQNNNAGGVTVINNTSYKNGINYGFGSNVQSGQKHYFRNNVSLSASVTVSNADAKSNSWDTGPAASASDFVSLDTSLATVSRDNDGTLPETSLFRLSANSKLINAGTKESNISYSGSAPDLGAFERN.

The first 25 residues, 1 to 25 (MKYLNCFISTGLAAFFLVNSTSVLA), serve as a signal peptide directing secretion. Cysteines 28 and 114 form a disulfide. 4 residues coordinate Ca(2+): Asp209, Asp233, Asp234, and Asp237. The active-site Proton acceptor is Lys273. Positions 402, 413, 416, 418, and 423 each coordinate Ca(2+).

It belongs to the polysaccharide lyase 9 family. Ca(2+) serves as cofactor.

Its subcellular location is the secreted. The enzyme catalyses Eliminative cleavage of (1-&gt;4)-alpha-D-galacturonan to give oligosaccharides with 4-deoxy-alpha-D-galact-4-enuronosyl groups at their non-reducing ends.. Its pathway is glycan metabolism; pectin degradation; 2-dehydro-3-deoxy-D-gluconate from pectin: step 2/5. Its function is as follows. Presents an endo-cleaving activity on polygalacturonate or partially methylated pectin. Is effective in the maceration of plant tissue, and has an important role in soft-rot disease. Is 280-fold less active against polygalacturonate than the major pectate lyase PelB. When assayed on polygalacturonate, PelL releases oligogalacturonates of different sizes; upon prolonged incubation, PelL degrades the primary products to unsaturated tetramer and pentamer in addition to unsaturated dimer and trimer. When assayed on oligogalacturonates (degrees of polymerization of 2 to 8), it preferentially forms unsaturated tetramer, and displays the highest activity on the octamer. The sequence is that of Pectate lyase L (pelL) from Dickeya dadantii (strain 3937) (Erwinia chrysanthemi (strain 3937)).